Consider the following 688-residue polypeptide: Lipase (688 aa).

The first 35 residues, 1–35, serve as a signal peptide directing secretion; that stretch reads MKTRQNKYSIRKFSVGASSILIAALLFMGGGSAQA. Positions 31–309 are disordered; sequence GSAQAAEQQQ…KSAKQKQYKN (279 aa). Positions 36–302 are cleaved as a propeptide — removed in mature form; that stretch reads AEQQQDKGTV…KNEDQTNKSA (267 aa). Residues 45–54 are compositionally biased toward polar residues; that stretch reads VENSTTQSIG. Composition is skewed to basic and acidic residues over residues 84–95 and 103–143; these read ESLHNETPKNED and SQND…KHAS. 2 stretches are compositionally biased toward polar residues: residues 144-175 and 184-211; these read ENNQTLHSKAAQSNEDVKTKPSQLDNTTAQQE and KQDTQSSKTTDLLRATGQNQSKDSQSTE. Residues 227-268 are compositionally biased toward basic and acidic residues; it reads KNDDDKVETFNLNSKEEPLKVDKQANPTTDKDKSSKNDKGSH. Residues 274 to 289 show a composition bias toward polar residues; it reads LESNAVATTNKQSKQQ. Residue Ser418 is the Nucleophile of the active site. The Charge relay system role is filled by Asp609. Residue Asp647 participates in Ca(2+) binding. Catalysis depends on His648, which acts as the Charge relay system. Residues Asp650, Asp655, and Asp658 each coordinate Ca(2+).

The protein belongs to the AB hydrolase superfamily. Lipase family.

The protein localises to the secreted. It carries out the reaction a triacylglycerol + H2O = a diacylglycerol + a fatty acid + H(+). This chain is Lipase (lip), found in Staphylococcus epidermidis (strain ATCC 35984 / DSM 28319 / BCRC 17069 / CCUG 31568 / BM 3577 / RP62A).